The primary structure comprises 1187 residues: DNA excision repair protein CSB (1187 aa).

The segment covering glutamine 31–threonine 43 has biased composition (polar residues). Disordered stretches follow at residues glutamine 31 to alanine 53, isoleucine 75 to alanine 102, lysine 217 to serine 242, and aspartate 265 to aspartate 351. Basic and acidic residues-rich tracts occupy residues lysine 92–glycine 101 and lysine 217–aspartate 230. The span at lysine 300–asparagine 319 shows a compositional bias: basic residues. The span at serine 339–aspartate 351 shows a compositional bias: acidic residues. The Helicase ATP-binding domain occupies tryptophan 384–glycine 580. Position 397–404 (aspartate 397–threonine 404) interacts with ATP. Residues serine 457–glutamate 480 are disordered. The span at serine 468 to glutamate 480 shows a compositional bias: acidic residues. A DEGH box motif is present at residues aspartate 531–histidine 534. The Helicase C-terminal domain maps to lysine 716–lysine 876. Disordered stretches follow at residues leucine 916–aspartate 945 and glycine 1095–arginine 1116. The segment covering alanine 918 to serine 933 has biased composition (low complexity).

It belongs to the SNF2/RAD54 helicase family. In terms of assembly, homodimer. Binds DNA. As to expression, expressed in proliferating tissues. Highly expressed in shoot apical meristem (SAM). Expressed in roots, young leaves, flag leaves, and panicles. Expressed at very low levels in mature leaves.

It is found in the nucleus. Functionally, essential factor involved in transcription-coupled nucleotide excision repair (TCR) which allows RNA polymerase II-blocking lesions to be rapidly removed from the transcribed strand of active genes. Upon DNA-binding, it locally modifies DNA conformation by wrapping the DNA around itself, thereby modifying the interface between stalled RNA polymerase II and DNA. It is required for transcription-coupled repair complex formation. This Oryza sativa subsp. japonica (Rice) protein is DNA excision repair protein CSB.